Here is a 298-residue protein sequence, read N- to C-terminus: MIYFIFLQVVMVLVSVAFLTLLERKILGYIQLRKGPNKVGFLGILQPFSDGVKLFCKEVSLPLVSNFMPYLVAPVFSLFLSFFLWTLVPFISYGAKFNLSFLLVICAMSVSVYSIMVAGWSSNSKYSLLGSIRAGAQTISYEVSLIIIILSPLMLFKKLDLEGYLVKSSYVGWPLYLCLPLGLCWFTTILAETNRTPFDLAEGESELVSGFNTEYMGVGFALIMLSEYASILFMSLLFSVVFGSMSFLMFCLVVYSYLWSRGSYPRYRYDNLMHLCWKSLLPTSLMFLCFYWSLSQGG.

A run of 7 helical transmembrane segments spans residues Ile-2–Leu-22, Leu-71–Ile-91, Leu-99–Gly-119, Ala-136–Phe-156, Val-171–Ala-191, Ile-231–Cys-251, and Leu-272–Trp-292.

This sequence belongs to the complex I subunit 1 family.

It localises to the mitochondrion inner membrane. It carries out the reaction a ubiquinone + NADH + 5 H(+)(in) = a ubiquinol + NAD(+) + 4 H(+)(out). Its function is as follows. Core subunit of the mitochondrial membrane respiratory chain NADH dehydrogenase (Complex I) that is believed to belong to the minimal assembly required for catalysis. Complex I functions in the transfer of electrons from NADH to the respiratory chain. The immediate electron acceptor for the enzyme is believed to be ubiquinone. The polypeptide is NADH-ubiquinone oxidoreductase chain 1 (ND1) (Artemia franciscana (Brine shrimp)).